A 509-amino-acid polypeptide reads, in one-letter code: Cytochrome P450 monooxygenase alt3 (509 aa).

A helical membrane pass occupies residues 25-45 (IITGIIVLPVLYVLLKVIYNL). Cys450 serves as a coordination point for heme.

Belongs to the cytochrome P450 family. The cofactor is heme.

Its subcellular location is the membrane. It functions in the pathway secondary metabolite biosynthesis. In terms of biological role, cytochrome P450 monooxygenase; part of the gene cluster that mediates the biosynthesis of alternapyrone derivatives. Alternapyrone is a decaketide with octa-methylation from methionine on every C2 unit except the third unit. All the domains in the polyketide synthase alt5 are apparently involved in alternapyrone synthesis, that is, the 8 CMeT, 7 KR, 7 DH, and 4 ER reactions in the 9 KS-mediated condensation steps required for alternapyrone synthesis. the alternapyrone produced by alt5 might be intensively modified by cytochrome P450 monooxygenases alt1, alt2 and alt3 and FAD-dependent oxidoreductase alt4 present in the alt gene cluster. The protein is Cytochrome P450 monooxygenase alt3 of Alternaria solani.